The chain runs to 714 residues: Structure-specific endonuclease subunit SLX4 2 (714 aa).

Composition is skewed to basic and acidic residues over residues 1-14 (MSPE…EDNL) and 24-34 (IHEETLAEESH). Disordered stretches follow at residues 1-114 (MSPE…EQQG) and 338-369 (SSGP…KTPQ). Over residues 36-46 (QAIQRSISRLS) the composition is skewed to polar residues. Over residues 79–92 (KTKKRKLKVSKPRK) the composition is skewed to basic residues.

This sequence belongs to the SLX4 family. Forms a heterodimer with SLX1. Phosphorylated in response to DNA damage.

The protein resides in the nucleus. Functionally, regulatory subunit of the SLX1-SLX4 structure-specific endonuclease that resolves DNA secondary structures generated during DNA repair and recombination. Has endonuclease activity towards branched DNA substrates, introducing single-strand cuts in duplex DNA close to junctions with ss-DNA. The protein is Structure-specific endonuclease subunit SLX4 2 of Candida tropicalis (strain ATCC MYA-3404 / T1) (Yeast).